A 564-amino-acid chain; its full sequence is Proline--tRNA ligase (564 aa).

It belongs to the class-II aminoacyl-tRNA synthetase family. ProS type 1 subfamily. In terms of assembly, homodimer.

It is found in the cytoplasm. It catalyses the reaction tRNA(Pro) + L-proline + ATP = L-prolyl-tRNA(Pro) + AMP + diphosphate. In terms of biological role, catalyzes the attachment of proline to tRNA(Pro) in a two-step reaction: proline is first activated by ATP to form Pro-AMP and then transferred to the acceptor end of tRNA(Pro). As ProRS can inadvertently accommodate and process non-cognate amino acids such as alanine and cysteine, to avoid such errors it has two additional distinct editing activities against alanine. One activity is designated as 'pretransfer' editing and involves the tRNA(Pro)-independent hydrolysis of activated Ala-AMP. The other activity is designated 'posttransfer' editing and involves deacylation of mischarged Ala-tRNA(Pro). The misacylated Cys-tRNA(Pro) is not edited by ProRS. The chain is Proline--tRNA ligase from Xylella fastidiosa (strain Temecula1 / ATCC 700964).